The primary structure comprises 24 residues: Cryptonin (24 aa).

Its function is as follows. Antimicrobial peptide, active against the Gram-negative bacterium E.coli K12-594 (MIC=3.12 ug/ml), the Gram-positive bacteria B.subtilis KCTC 3086 (MIC=3.12 ug/ml), S.aureus KCTC 1928 (MIC=25 ug/ml) and M.luteus KCTC 3063 (MIC=1.56 ug/ml), the antibiotic resistant bacteria methicillin-resistant S.aureus (MRSA) (MIC=25 ug/ml) and vancomycin-resistant Enterococci (VRE) (MIC=25 ug/ml), and the fungi C.albicans KCTC 7965 (MIC=50 ug/ml) and C.tropicalis KCTC 1925 (MIC=3.12 ug/ml). Has very low hemolytic activity on rat erythrocytes. The chain is Cryptonin from Cryptotympana dubia (Korean horse cicada).